Consider the following 155-residue polypeptide: Small ribosomal subunit protein bS6 (155 aa).

A disordered region spans residues 94-155; the sequence is EKHEEGPSAM…RPRRPREDRV (62 aa).

It belongs to the bacterial ribosomal protein bS6 family.

Functionally, binds together with bS18 to 16S ribosomal RNA. The chain is Small ribosomal subunit protein bS6 from Rhizobium johnstonii (strain DSM 114642 / LMG 32736 / 3841) (Rhizobium leguminosarum bv. viciae).